A 127-amino-acid chain; its full sequence is E3 ubiquitin-protein ligase PPP1R11 (127 aa).

2 disordered regions span residues 1–55 (MAEA…EHMG) and 70–127 (AFGE…PMQH). Residue Ala2 is modified to N-acetylalanine. Over residues 11-23 (ETVTETTVTVTTE) the composition is skewed to low complexity. Residues 40–55 (KKVEWSSDTVDNEHMG) are compositionally biased toward basic and acidic residues. The interval 53-63 (HMGRRSSKCCC) is atypical RING finger domain 1. Phosphoserine occurs at positions 74 and 75. A Phosphothreonine modification is found at Thr76. Ser78 carries the phosphoserine modification. The segment at 86–95 (CGHTHCVRGH) is atypical RING finger domain 2. Residues 90-100 (HCVRGHRKGRR) are compositionally biased toward basic residues. Positions 103–127 (TPGPTPTTPPQPPDPSQPPPGPMQH) are enriched in pro residues. Thr110 is modified (phosphothreonine).

Interacts with TLR2 and UBE2D2. Auto-ubiquitinated.

The enzyme catalyses S-ubiquitinyl-[E2 ubiquitin-conjugating enzyme]-L-cysteine + [acceptor protein]-L-lysine = [E2 ubiquitin-conjugating enzyme]-L-cysteine + N(6)-ubiquitinyl-[acceptor protein]-L-lysine.. It functions in the pathway protein modification; protein ubiquitination. Functionally, atypical E3 ubiquitin-protein ligase which ubiquitinates TLR2 at 'Lys-754' leading to its degradation by the proteasome. Plays a role in regulating inflammatory cytokine release and gram-positive bacterial clearance by functioning, in part, through the ubiquitination and degradation of TLR2. Inhibitor of protein phosphatase 1. The protein is E3 ubiquitin-protein ligase PPP1R11 (Ppp1r11) of Rattus norvegicus (Rat).